Here is a 162-residue protein sequence, read N- to C-terminus: Podoplanin (162 aa).

The signal sequence occupies residues 1–22; sequence MWKVSALLFVLGSASLWVLAEG. Residues 23–57 form a disordered region; sequence ASTGQPEDDTETTGLEGGVAMPGAEDDVVTPGTSE. Topologically, residues 23-131 are extracellular; it reads ASTGQPEDDT…EKDGLSTVTL (109 aa). O-linked (GalNAc...) threonine glycosylation is found at threonine 25, threonine 32, threonine 34, threonine 35, threonine 52, threonine 55, threonine 65, threonine 66, threonine 76, and threonine 85. Residues 85 to 108 are compositionally biased toward polar residues; it reads TSESTVHAQEQSPSATASNVATSH. The disordered stretch occupies residues 85 to 119; that stretch reads TSESTVHAQEQSPSATASNVATSHSTEKVDGDTQT. O-linked (GalNAc...) serine glycosylation is found at serine 86 and serine 88. Threonine 89 is a glycosylation site (O-linked (GalNAc...) threonine). Serine 96 and serine 98 each carry an O-linked (GalNAc...) serine glycan. A glycan (O-linked (GalNAc...) threonine) is linked at threonine 100. Residue serine 102 is glycosylated (O-linked (GalNAc...) serine). A glycan (O-linked (GalNAc...) threonine) is linked at threonine 106. Serine 107 and serine 109 each carry an O-linked (GalNAc...) serine glycan. The span at 109 to 119 shows a compositional bias: basic and acidic residues; the sequence is STEKVDGDTQT. Threonine 110, threonine 117, threonine 119, and threonine 120 each carry an O-linked (GalNAc...) threonine glycan. Residues 132 to 152 traverse the membrane as a helical segment; sequence VGIIVGVLLAIGFIGAIIVVV. The segment at 133–137 is requires for dimerization and lipid rafts association; sequence GIIVG. Residues 153 to 162 lie on the Cytoplasmic side of the membrane; the sequence is MRKMSGRYSP. A requires for interaction with MSN and EZR region spans residues 154 to 155; sequence RK.

It belongs to the podoplanin family. As to quaternary structure, homodimer. Interacts with CLEC1B; the interaction is independent of CLEC1B glycosylation and activates CLEC1B; the interaction is dependent of sialic acid on O-glycans. Interacts with CD9; this interaction is homophilic and attenuates platelet aggregation and pulmonary metastasis induced by PDPN. Interacts with LGALS8; the interaction is glycosylation-dependent; may participate in connection of the lymphatic endothelium to the surrounding extracellular matrix. Interacts with HSPA9. Interacts (via extracellular domain) with CD44; this interaction is required for PDPN-mediated directional migration and regulation of lamellipodia extension/stabilization during cell spreading and migration. Interacts (via cytoplasmic domain) with MSN and EZR; activates RHOA and promotes epithelial-mesenchymal transition. Interacts with CCL21; relocalized PDPN to the basolateral membrane. Post-translationally, extensively O-glycosylated. Contains sialic acid residues. O-glycosylation is necessary for platelet aggregation activity. Disialylated at Thr-52; sialic acid is critical for platelet-aggregating activity and for CLEC1B interaction. In terms of processing, the N-terminus is blocked. Cleaved by a metalloprotease within its extracellular (EC) domain, generating a membrane-bound C-terminal fragment (PCTF33) and an extracellular fragment. The resulting membrane-bound C-terminal fragment (PCTF33) is further processed between Val-150 and Val-151 by PSEN1/gamma-secretase generating the intracellular domain of podoplanin (PICD). In terms of tissue distribution, highly expressed in placenta, lung, skeletal muscle and brain. Weakly expressed in brain, kidney and liver. In placenta, expressed on the apical plasma membrane of endothelium. In lung, expressed in alveolar epithelium. Up-regulated in colorectal tumors and expressed in 25% of early oral squamous cell carcinomas.

It is found in the membrane. Its subcellular location is the cell projection. The protein resides in the lamellipodium membrane. The protein localises to the filopodium membrane. It localises to the microvillus membrane. It is found in the ruffle membrane. Its subcellular location is the membrane raft. The protein resides in the apical cell membrane. The protein localises to the basolateral cell membrane. It localises to the invadopodium. It is found in the cytoplasm. Its subcellular location is the cytosol. Its function is as follows. Mediates effects on cell migration and adhesion through its different partners. During development plays a role in blood and lymphatic vessels separation by binding CLEC1B, triggering CLEC1B activation in platelets and leading to platelet activation and/or aggregation. Interaction with CD9, on the contrary, attenuates platelet aggregation induced by PDPN. Through MSN or EZR interaction promotes epithelial-mesenchymal transition (EMT) leading to ERZ phosphorylation and triggering RHOA activation leading to cell migration increase and invasiveness. Interaction with CD44 promotes directional cell migration in epithelial and tumor cells. In lymph nodes (LNs), controls fibroblastic reticular cells (FRCs) adhesion to the extracellular matrix (ECM) and contraction of the actomyosin by maintaining ERM proteins (EZR; MSN and RDX) and MYL9 activation through association with unknown transmembrane proteins. Engagement of CLEC1B by PDPN promotes FRCs relaxation by blocking lateral membrane interactions leading to reduction of ERM proteins (EZR; MSN and RDX) and MYL9 activation. Through binding with LGALS8 may participate in connection of the lymphatic endothelium to the surrounding extracellular matrix. In keratinocytes, induces changes in cell morphology showing an elongated shape, numerous membrane protrusions, major reorganization of the actin cytoskeleton, increased motility and decreased cell adhesion. Controls invadopodia stability and maturation leading to efficient degradation of the extracellular matrix (ECM) in tumor cells through modulation of RHOC activity in order to activate ROCK1/ROCK2 and LIMK1/LIMK2 and inactivation of CFL1. Required for normal lung cell proliferation and alveolus formation at birth. Does not function as a water channel or as a regulator of aquaporin-type water channels. Does not have any effect on folic acid or amino acid transport. The sequence is that of Podoplanin from Homo sapiens (Human).